A 296-amino-acid polypeptide reads, in one-letter code: uncharacterized protein (296 aa).

The signal sequence occupies residues 1–20 (MRKFIFVLLTLLLVSPFSFA).

This is an uncharacterized protein from Escherichia coli (strain K12).